A 441-amino-acid chain; its full sequence is Ribosomal protein uS12 methylthiotransferase RimO (441 aa).

Positions 8-118 (PKIGFVSLGC…VLEHVHHYVP (111 aa)) constitute an MTTase N-terminal domain. [4Fe-4S] cluster is bound by residues Cys-17, Cys-53, Cys-82, Cys-150, Cys-154, and Cys-157. In terms of domain architecture, Radical SAM core spans 136–373 (LTPRHYAYLK…MQLQQQISAE (238 aa)). One can recognise a TRAM domain in the interval 376-441 (QEKVGREILV…DEYDLWGSRV (66 aa)).

The protein belongs to the methylthiotransferase family. RimO subfamily. Requires [4Fe-4S] cluster as cofactor.

It is found in the cytoplasm. It carries out the reaction L-aspartate(89)-[ribosomal protein uS12]-hydrogen + (sulfur carrier)-SH + AH2 + 2 S-adenosyl-L-methionine = 3-methylsulfanyl-L-aspartate(89)-[ribosomal protein uS12]-hydrogen + (sulfur carrier)-H + 5'-deoxyadenosine + L-methionine + A + S-adenosyl-L-homocysteine + 2 H(+). In terms of biological role, catalyzes the methylthiolation of an aspartic acid residue of ribosomal protein uS12. The sequence is that of Ribosomal protein uS12 methylthiotransferase RimO from Shigella flexneri.